The sequence spans 154 residues: Myoglobin (154 aa).

The 147-residue stretch at 1 to 147 (MADVKKNCLA…FNDECQHQLA (147 aa)) folds into the Globin domain. A heme b-binding site is contributed by His-96.

Belongs to the globin family.

Its subcellular location is the cytoplasm. This chain is Myoglobin (GLBB), found in Nippostrongylus brasiliensis (Rat hookworm).